Reading from the N-terminus, the 215-residue chain is uncharacterized protein (215 aa).

Transmembrane regions (helical) follow at residues 21-40 (IIKY…VLIN), 50-69 (LIFS…TIIF), 95-117 (FVAI…YVFF), 122-144 (LEIA…LVVL), 157-179 (NFVG…LILQ), and 185-207 (LIFI…SAYL).

It belongs to the CcmB/CycW/HelB family.

The protein localises to the cell membrane. This is an uncharacterized protein from Rickettsia prowazekii (strain Madrid E).